The chain runs to 271 residues: Small ribosomal subunit protein uS2 (271 aa).

The segment covering 229–242 (KERKGKDAEEELKK) has biased composition (basic and acidic residues). The segment at 229-271 (KERKGKDAEEELKKAAAPKAAPAAEAAPAAEAPAAPVVEAAAE) is disordered. The segment covering 243-271 (AAAPKAAPAAEAAPAAEAPAAPVVEAAAE) has biased composition (low complexity).

Belongs to the universal ribosomal protein uS2 family.

The protein is Small ribosomal subunit protein uS2 of Nitratidesulfovibrio vulgaris (strain DSM 19637 / Miyazaki F) (Desulfovibrio vulgaris).